The primary structure comprises 284 residues: 4-hydroxy-3-methylbut-2-enyl diphosphate reductase (284 aa).

Cys12 contributes to the [4Fe-4S] cluster binding site. Residues His40 and His72 each contribute to the (2E)-4-hydroxy-3-methylbut-2-enyl diphosphate site. 2 residues coordinate dimethylallyl diphosphate: His40 and His72. Isopentenyl diphosphate-binding residues include His40 and His72. A [4Fe-4S] cluster-binding site is contributed by Cys94. Residue His122 participates in (2E)-4-hydroxy-3-methylbut-2-enyl diphosphate binding. His122 serves as a coordination point for dimethylallyl diphosphate. An isopentenyl diphosphate-binding site is contributed by His122. The active-site Proton donor is Glu124. Position 161 (Thr161) interacts with (2E)-4-hydroxy-3-methylbut-2-enyl diphosphate. Residue Cys193 coordinates [4Fe-4S] cluster. The (2E)-4-hydroxy-3-methylbut-2-enyl diphosphate site is built by Ser221, Asn223, and Ser264. Dimethylallyl diphosphate is bound by residues Ser221, Asn223, and Ser264. Isopentenyl diphosphate contacts are provided by Ser221, Asn223, and Ser264.

This sequence belongs to the IspH family. It depends on [4Fe-4S] cluster as a cofactor.

The enzyme catalyses isopentenyl diphosphate + 2 oxidized [2Fe-2S]-[ferredoxin] + H2O = (2E)-4-hydroxy-3-methylbut-2-enyl diphosphate + 2 reduced [2Fe-2S]-[ferredoxin] + 2 H(+). It catalyses the reaction dimethylallyl diphosphate + 2 oxidized [2Fe-2S]-[ferredoxin] + H2O = (2E)-4-hydroxy-3-methylbut-2-enyl diphosphate + 2 reduced [2Fe-2S]-[ferredoxin] + 2 H(+). The protein operates within isoprenoid biosynthesis; dimethylallyl diphosphate biosynthesis; dimethylallyl diphosphate from (2E)-4-hydroxy-3-methylbutenyl diphosphate: step 1/1. It functions in the pathway isoprenoid biosynthesis; isopentenyl diphosphate biosynthesis via DXP pathway; isopentenyl diphosphate from 1-deoxy-D-xylulose 5-phosphate: step 6/6. Functionally, catalyzes the conversion of 1-hydroxy-2-methyl-2-(E)-butenyl 4-diphosphate (HMBPP) into a mixture of isopentenyl diphosphate (IPP) and dimethylallyl diphosphate (DMAPP). Acts in the terminal step of the DOXP/MEP pathway for isoprenoid precursor biosynthesis. The chain is 4-hydroxy-3-methylbut-2-enyl diphosphate reductase from Dehalococcoides mccartyi (strain CBDB1).